Here is a 119-residue protein sequence, read N- to C-terminus: Protein RALF-like 22 (119 aa).

The N-terminal stretch at 1 to 23 (MTNTRAIYAVIAILAIVISAVES) is a signal peptide. A propeptide spans 24–70 (TGDFGDSLDFVRAGSSSLFSGCTGSIAECIAEEEEMEFDSDISRRIL) (removed in mature form). 2 cysteine pairs are disulfide-bonded: C88–C98 and C111–C117.

The protein belongs to the plant rapid alkalinization factor (RALF) family. In terms of processing, proteolytically cleaved, probably by S1P, a subtilisin-like serine protease (subtilase).

It is found in the secreted. Its function is as follows. Cell signaling peptide that may regulate plant stress, growth, and development. Mediates a rapid alkalinization of extracellular space by mediating a transient increase in the cytoplasmic Ca(2+) concentration leading to a calcium-dependent signaling events through a cell surface receptor and a concomitant activation of some intracellular mitogen-activated protein kinases. The sequence is that of Protein RALF-like 22 (RALFL22) from Arabidopsis thaliana (Mouse-ear cress).